The chain runs to 580 residues: PX domain-containing protein kinase-like protein (580 aa).

The PX domain maps to 14–126 (LDDTVPLTAA…KFLDPNNYSA (113 aa)). One can recognise a Protein kinase domain in the interval 88 to 481 (FIAERQKGLQ…VENSEEQPVK (394 aa)). Residues 433-551 (EQKQIHQHRR…LPQAVNGVNR (119 aa)) are disordered. 2 stretches are compositionally biased toward basic residues: residues 437–448 (IHQHRRLTRAQS) and 457–469 (KRRK…KSKR). A compositionally biased stretch (low complexity) spans 483–514 (SNANNSAGSGASSPLTSPSSPTPPSTAGLSSA). Residues 515–531 (LPPPPPPPPPPPPPAGP) show a composition bias toward pro residues. Positions 549–568 (VNRGALLSSIQNFQKGTLRK) constitute a WH2 domain.

This sequence belongs to the protein kinase superfamily.

It is found in the cytoplasm. It localises to the cell membrane. Binds to and modulates brain Na,K-ATPase subunits ATP1B1 and ATP1B3 and may thereby participate in the regulation of electrical excitability and synaptic transmission. May not display kinase activity. This is PX domain-containing protein kinase-like protein from Rattus norvegicus (Rat).